The following is a 389-amino-acid chain: Phosphoglycerate kinase (389 aa).

Substrate contacts are provided by residues 21 to 23 (DLN), Arg36, 59 to 62 (HLGR), Arg112, and Arg145. Residues Lys196, Glu318, and 344–347 (GGDS) each bind ATP.

Belongs to the phosphoglycerate kinase family. As to quaternary structure, monomer.

It localises to the cytoplasm. The enzyme catalyses (2R)-3-phosphoglycerate + ATP = (2R)-3-phospho-glyceroyl phosphate + ADP. The protein operates within carbohydrate degradation; glycolysis; pyruvate from D-glyceraldehyde 3-phosphate: step 2/5. The chain is Phosphoglycerate kinase from Desulfovibrio desulfuricans (strain ATCC 27774 / DSM 6949 / MB).